We begin with the raw amino-acid sequence, 279 residues long: Thymidylate synthase (279 aa).

133–134 (RR) is a binding site for dUMP. Cys-154 serves as the catalytic Nucleophile. DUMP contacts are provided by residues 178–181 (RSND), Asn-189, and 219–221 (HIY). Asp-181 serves as a coordination point for (6R)-5,10-methylene-5,6,7,8-tetrahydrofolate. A (6R)-5,10-methylene-5,6,7,8-tetrahydrofolate-binding site is contributed by Ala-278.

Belongs to the thymidylate synthase family. Bacterial-type ThyA subfamily. Homodimer.

It localises to the cytoplasm. The catalysed reaction is dUMP + (6R)-5,10-methylene-5,6,7,8-tetrahydrofolate = 7,8-dihydrofolate + dTMP. It participates in pyrimidine metabolism; dTTP biosynthesis. Catalyzes the reductive methylation of 2'-deoxyuridine-5'-monophosphate (dUMP) to 2'-deoxythymidine-5'-monophosphate (dTMP) while utilizing 5,10-methylenetetrahydrofolate (mTHF) as the methyl donor and reductant in the reaction, yielding dihydrofolate (DHF) as a by-product. This enzymatic reaction provides an intracellular de novo source of dTMP, an essential precursor for DNA biosynthesis. This chain is Thymidylate synthase, found in Streptococcus suis (strain 05ZYH33).